The sequence spans 62 residues: Chromatin protein Cren7 1 (62 aa).

The protein belongs to the Cren7 family. In terms of assembly, monomer. In terms of processing, methylated at multiple sites, to varying extents.

The protein resides in the chromosome. Its subcellular location is the cytoplasm. A chromatin protein, binds double-stranded DNA without sequence specificity. Constrains negative DNA supercoils. This is Chromatin protein Cren7 1 (cren7-1) from Hyperthermus butylicus (strain DSM 5456 / JCM 9403 / PLM1-5).